A 271-amino-acid polypeptide reads, in one-letter code: Formamidopyrimidine-DNA glycosylase (271 aa).

P2 (schiff-base intermediate with DNA) is an active-site residue. The active-site Proton donor is the E3. Catalysis depends on K58, which acts as the Proton donor; for beta-elimination activity. 3 residues coordinate DNA: H92, R111, and R152. An FPG-type zinc finger spans residues 237–271 (FVYGREGEACKQCGRVLKHATIGQRATVWCGSCQR). R261 (proton donor; for delta-elimination activity) is an active-site residue.

The protein belongs to the FPG family. Monomer. Zn(2+) is required as a cofactor.

The enzyme catalyses Hydrolysis of DNA containing ring-opened 7-methylguanine residues, releasing 2,6-diamino-4-hydroxy-5-(N-methyl)formamidopyrimidine.. The catalysed reaction is 2'-deoxyribonucleotide-(2'-deoxyribose 5'-phosphate)-2'-deoxyribonucleotide-DNA = a 3'-end 2'-deoxyribonucleotide-(2,3-dehydro-2,3-deoxyribose 5'-phosphate)-DNA + a 5'-end 5'-phospho-2'-deoxyribonucleoside-DNA + H(+). In terms of biological role, involved in base excision repair of DNA damaged by oxidation or by mutagenic agents. Acts as a DNA glycosylase that recognizes and removes damaged bases. Has a preference for oxidized purines, such as 7,8-dihydro-8-oxoguanine (8-oxoG). Has AP (apurinic/apyrimidinic) lyase activity and introduces nicks in the DNA strand. Cleaves the DNA backbone by beta-delta elimination to generate a single-strand break at the site of the removed base with both 3'- and 5'-phosphates. This chain is Formamidopyrimidine-DNA glycosylase, found in Xanthomonas axonopodis pv. citri (strain 306).